The primary structure comprises 460 residues: MPSCTASTMPGMICKNPDLEFDSLQPCFYPDEDDFYFGGPDSTPPGEDIWKKFELLPTPPLSPSRAFSEQSPEPSDWATEMLLPEADLWGNPAEEDAFGLGGLGGLTPNPVILQDCMWSGFSAREKLERAVSEKLQHGRGPPAAGPATPGAGAANPAGRGHGGTAGAGRAGAALPAELAHPAAECVDPAVVFPFPVNKRDPAPVPVAPAGSPAVGAAVAGAAAPASAAVAAPPRLGGRPANGGDHKALSTSGEDTLSDSDDEDDEEEDEEEEIDVVTVEKRRSSSNSKAVTTFTITVRPKNAALGLGRAQSSELILKRCVPIHQQHNYAAPSPYVESEDAPPQKKIKSEVSPRPLKSVIPPKAKSLSPRNSDSEDSERRRNHNILERQRRNDLRSSFLTLRDHVPELVKNEKAAKVVILKKATEYVHSLQAEEHQLLLEKEKLQARQQQLLKKIELARTC.

The segment at 19 to 47 (LEFDSLQPCFYPDEDDFYFGGPDSTPPGE) is interaction with AURKA. The interval 61-90 (LSPSRAFSEQSPEPSDWATEMLLPEADLWG) is interaction with AURKA and FBXW7. The 9aaTAD motif lies at 76-85 (DWATEMLLPE). Disordered stretches follow at residues 131–169 (VSEK…GAGR), 221–288 (AAAP…SNSK), and 330–388 (APSP…LERQ). The segment covering 138–158 (GRGPPAAGPATPGAGAANPAG) has biased composition (low complexity). The span at 159 to 169 (RGHGGTAGAGR) shows a compositional bias: gly residues. Positions 221–233 (AAAPASAAVAAPP) are enriched in low complexity. Acidic residues predominate over residues 255-274 (TLSDSDDEDDEEEDEEEEID). A phosphoserine; by CK2 mark is found at serine 257 and serine 259. The bHLH domain occupies 377 to 429 (ERRRNHNILERQRRNDLRSSFLTLRDHVPELVKNEKAAKVVILKKATEYVHSL). The tract at residues 429–450 (LQAEEHQLLLEKEKLQARQQQL) is leucine-zipper.

Efficient DNA binding requires dimerization with another bHLH protein. Binds DNA as a heterodimer with MAX. Interacts with KDM5A, KDM5B and HUWE1. Interacts with MYCNOS. Interacts with AURKA; interaction is phospho-independent and triggers AURKA activation; AURKA competes with FBXW7 for binding to unphosphorylated MYCN but not for binding to unphosphorylated MYCN. Interacts with FBXW7; FBXW7 competes with AURKA for binding to unphosphorylated MYCN but not for binding to phosphorylated MYCN. Phosphorylated by GSK3-beta which may promote its degradation. Phosphorylated by AURKA.

It localises to the nucleus. In terms of biological role, positively regulates the transcription of MYCNOS in neuroblastoma cells. This chain is N-myc proto-oncogene protein (MYCN), found in Marmota monax (Woodchuck).